The following is a 133-amino-acid chain: Probable nuclear transport factor 2 (133 aa).

Positions 10-128 (VAKAFIQHYY…YFIGNEIFRL (119 aa)) constitute an NTF2 domain.

It is found in the cytoplasm. Its function is as follows. Facilitates protein transport into the nucleus. Could be part of a multicomponent system of cytosolic factors that assemble at the pore complex during nuclear import. The polypeptide is Probable nuclear transport factor 2 (ran-4) (Caenorhabditis elegans).